The sequence spans 245 residues: MASLGVNIDHIANVRQARQTVEPDPVPMALLAELGGADGITVHLREDRRHIQDRDLDLLRATVRSRLNLEMAATAEMVGIALKIQPDMVTLVPERRQEVTTEGGLDVAAQQGSLKGMVDQLQVAGIPVSLFVDPVSQQLEAAFKSGARWVELHTGAYAEACWADQSFELARLTEATARARSLGLRVNAGHGLTYQNVEAVAAIEGIEELNIGHTIVARSIAVGLKEAVREMKRLVQNPRREPLFG.

N7 provides a ligand contact to 3-amino-2-oxopropyl phosphate. Residue 9–10 (DH) participates in 1-deoxy-D-xylulose 5-phosphate binding. R18 is a binding site for 3-amino-2-oxopropyl phosphate. H43 acts as the Proton acceptor in catalysis. Positions 45 and 50 each coordinate 1-deoxy-D-xylulose 5-phosphate. The active-site Proton acceptor is the E70. Position 100 (T100) interacts with 1-deoxy-D-xylulose 5-phosphate. Catalysis depends on H190, which acts as the Proton donor. Residues G191 and 212–213 (GH) each bind 3-amino-2-oxopropyl phosphate.

Belongs to the PNP synthase family. Homooctamer; tetramer of dimers.

It is found in the cytoplasm. It carries out the reaction 3-amino-2-oxopropyl phosphate + 1-deoxy-D-xylulose 5-phosphate = pyridoxine 5'-phosphate + phosphate + 2 H2O + H(+). The protein operates within cofactor biosynthesis; pyridoxine 5'-phosphate biosynthesis; pyridoxine 5'-phosphate from D-erythrose 4-phosphate: step 5/5. In terms of biological role, catalyzes the complicated ring closure reaction between the two acyclic compounds 1-deoxy-D-xylulose-5-phosphate (DXP) and 3-amino-2-oxopropyl phosphate (1-amino-acetone-3-phosphate or AAP) to form pyridoxine 5'-phosphate (PNP) and inorganic phosphate. This Prochlorococcus marinus (strain MIT 9313) protein is Pyridoxine 5'-phosphate synthase.